The sequence spans 298 residues: tRNA-cytidine(32) 2-sulfurtransferase (298 aa).

The segment at 1–26 (MTAVISLPDPPQRASRGPRVAGPGQD) is disordered. The PP-loop motif signature appears at 57–62 (SGGKDS). Residues Cys-132, Cys-135, and Cys-223 each contribute to the [4Fe-4S] cluster site.

Belongs to the TtcA family. In terms of assembly, homodimer. Mg(2+) serves as cofactor. Requires [4Fe-4S] cluster as cofactor.

The protein localises to the cytoplasm. It carries out the reaction cytidine(32) in tRNA + S-sulfanyl-L-cysteinyl-[cysteine desulfurase] + AH2 + ATP = 2-thiocytidine(32) in tRNA + L-cysteinyl-[cysteine desulfurase] + A + AMP + diphosphate + H(+). It functions in the pathway tRNA modification. In terms of biological role, catalyzes the ATP-dependent 2-thiolation of cytidine in position 32 of tRNA, to form 2-thiocytidine (s(2)C32). The sulfur atoms are provided by the cysteine/cysteine desulfurase (IscS) system. The chain is tRNA-cytidine(32) 2-sulfurtransferase from Stenotrophomonas maltophilia (strain R551-3).